Consider the following 499-residue polypeptide: Zinc finger protein PLAG1 (499 aa).

Residues 1-33 (MATVIPGDLSEVRDTQKAPSGKRKRGESKPRKN) are disordered. The segment at 2 to 84 (ATVIPGDLSE…SKYKLQRHMA (83 aa)) is interaction with KPNA2. A Nuclear localization signal motif is present at residues 22–25 (KRKR). 7 consecutive C2H2-type zinc fingers follow at residues 34 to 56 (FPCQ…SFSH), 62 to 86 (YKCT…MATH), 92 to 114 (HKCN…LHTH), 121 to 143 (FKCE…LALH), 150 to 172 (LTCK…LKSH), 185 to 207 (HQCE…MVVH), and 213 to 236 (FLCQ…KKSH). The interval 41 to 242 (KAFNSVEKLK…KKSHNQELLK (202 aa)) is decreased nuclear import with localization in the nucleus but also in the cytoplasm. The segment at 243–383 (VKTEPVDFLD…SQASSSKLGL (141 aa)) is repression domain; contains 3 sumoylation motifs and massively decrease transcription activity. The interval 243–499 (VKTEPVDFLD…TLPRFHQAFQ (257 aa)) is activates transcription; Inhibition of nuclear import due to lack of NLS and KPNA2 interaction. Glycyl lysine isopeptide (Lys-Gly) (interchain with G-Cter in SUMO) cross-links involve residues K244 and K263. The disordered stretch occupies residues 364 to 400 (QGGAPSSSQDSQASSSKLGLEPQSGSPDDGAGDLSLS). Over residues 369-379 (SSSQDSQASSS) the composition is skewed to low complexity. Positions 384–499 (EPQSGSPDDG…TLPRFHQAFQ (116 aa)) are massively activates transcription.

Belongs to the krueppel C2H2-type zinc-finger protein family. Interacts with KPNA2, which escorts protein to the nucleus via interaction with nuclear localization signal. Interacts with E3 SUMO-protein ligase PIAS1, PIAS2 and PIAS4. In terms of processing, sumoylated with SUMO1; which inhibits transcriptional activity, but does not affect nuclear localization. Blockers of sumoylation pathway such as SENP3 and inactive UBE2I increases transcriptional capacity. Sumoylation is increased in the presence of PIAS1. Post-translationally, acetylated by lysine acetyltransferase EP300; which activates transcriptional capacity. Lysine residues that are sumoylated also seem to be target for acetylation. In terms of tissue distribution, expressed in heart, spleen, lung, kidney, brain, testis and epididymis but not in salivary glands.

It is found in the nucleus. Its function is as follows. Transcription factor whose activation results in up-regulation of target genes, such as IGFII, leading to uncontrolled cell proliferation: when overexpressed in cultured cells, higher proliferation rate and transformation are observed. Other target genes such as CRLF1, CRABP2, CRIP2, PIGF are strongly induced in cells with PLAG1 induction. Proto-oncogene whose ectopic expression can trigger the development of pleomorphic adenomas of the salivary gland and lipoblastomas. Cooperates with CBFB-MYH11. The polypeptide is Zinc finger protein PLAG1 (Plag1) (Rattus norvegicus (Rat)).